We begin with the raw amino-acid sequence, 491 residues long: Ketol-acid reductoisomerase (NADP(+)) (491 aa).

In terms of domain architecture, KARI N-terminal Rossmann spans 15–208; that stretch reads AQLGKCRFMA…GGHRAGVLES (194 aa). NADP(+)-binding positions include 45-48, Arg68, Arg76, Ser78, and 108-110; these read CGAQ and DKQ. His132 is an active-site residue. Position 158 (Gly158) interacts with NADP(+). 2 consecutive KARI C-terminal knotted domains span residues 209–344 and 345–484; these read SFVA…TAPQ and YEGK…MTDM. Residues Asp217, Glu221, Glu389, and Glu393 each coordinate Mg(2+). Residue Ser414 participates in substrate binding.

Belongs to the ketol-acid reductoisomerase family. Mg(2+) is required as a cofactor.

The catalysed reaction is (2R)-2,3-dihydroxy-3-methylbutanoate + NADP(+) = (2S)-2-acetolactate + NADPH + H(+). It catalyses the reaction (2R,3R)-2,3-dihydroxy-3-methylpentanoate + NADP(+) = (S)-2-ethyl-2-hydroxy-3-oxobutanoate + NADPH + H(+). Its pathway is amino-acid biosynthesis; L-isoleucine biosynthesis; L-isoleucine from 2-oxobutanoate: step 2/4. It participates in amino-acid biosynthesis; L-valine biosynthesis; L-valine from pyruvate: step 2/4. Involved in the biosynthesis of branched-chain amino acids (BCAA). Catalyzes an alkyl-migration followed by a ketol-acid reduction of (S)-2-acetolactate (S2AL) to yield (R)-2,3-dihydroxy-isovalerate. In the isomerase reaction, S2AL is rearranged via a Mg-dependent methyl migration to produce 3-hydroxy-3-methyl-2-ketobutyrate (HMKB). In the reductase reaction, this 2-ketoacid undergoes a metal-dependent reduction by NADPH to yield (R)-2,3-dihydroxy-isovalerate. The sequence is that of Ketol-acid reductoisomerase (NADP(+)) from Klebsiella pneumoniae subsp. pneumoniae (strain ATCC 700721 / MGH 78578).